Reading from the N-terminus, the 462-residue chain is uncharacterized protein (462 aa).

A run of 2 helical transmembrane segments spans residues 381-401 and 433-453; these read WILGSMILFTILASILRFKGM and LWILEPIIRVTSLILLGNLYI.

The protein localises to the cell membrane. This is an uncharacterized protein from Methanocaldococcus jannaschii (strain ATCC 43067 / DSM 2661 / JAL-1 / JCM 10045 / NBRC 100440) (Methanococcus jannaschii).